Consider the following 201-residue polypeptide: MKIIGLTGGMAAGKSTVAALFRREGVPVFDADACVRALQGERGKALPLIGQAFPGTVVASRLDRAALREAVRGRPEALQRLEAIMHPLVRVERERFLKQCRARHEPFCVLDIPLLMEIGEDRRCDVVMVAEAPMGTRLARIRQRGRSGGRMSLADAKGLLARQMSDHERRRRADIVIRTGLSRGQAVRQVHALLHRLREAS.

The DPCK domain occupies 3-201 (IIGLTGGMAA…ALLHRLREAS (199 aa)). Residue 11–16 (AAGKST) participates in ATP binding.

This sequence belongs to the CoaE family.

The protein resides in the cytoplasm. The enzyme catalyses 3'-dephospho-CoA + ATP = ADP + CoA + H(+). Its pathway is cofactor biosynthesis; coenzyme A biosynthesis; CoA from (R)-pantothenate: step 5/5. Its function is as follows. Catalyzes the phosphorylation of the 3'-hydroxyl group of dephosphocoenzyme A to form coenzyme A. This chain is Dephospho-CoA kinase, found in Gluconobacter oxydans (strain 621H) (Gluconobacter suboxydans).